Reading from the N-terminus, the 263-residue chain is UPF0758 protein Pden_2304 (263 aa).

Residues 141–263 (VLTSWDALLD…ELSFRSEGLL (123 aa)) enclose the MPN domain. Residues H212, H214, and D225 each coordinate Zn(2+). The JAMM motif signature appears at 212-225 (HNHPSGDPTPSQAD).

It belongs to the UPF0758 family.

This is UPF0758 protein Pden_2304 from Paracoccus denitrificans (strain Pd 1222).